Reading from the N-terminus, the 65-residue chain is ARDGYIANDRNCVYTCALNPYCDSECKKNGADSGYCQWFGRFGNACWCKNLPDKVPIRIPGECRG.

Residues 2–64 (RDGYIANDRN…VPIRIPGECR (63 aa)) form the LCN-type CS-alpha/beta domain. 4 disulfides stabilise this stretch: C12–C63, C16–C36, C22–C46, and C26–C48. Residue R64 is modified to Arginine amide.

This sequence belongs to the long (4 C-C) scorpion toxin superfamily. Sodium channel inhibitor family. Alpha subfamily. In terms of tissue distribution, expressed by the venom gland.

It is found in the secreted. Its function is as follows. Alpha toxins bind voltage-independently at site-3 of sodium channels (Nav) and inhibit the inactivation of the activated channels, thereby blocking neuronal transmission. In Mesobuthus eupeus (Lesser Asian scorpion), this protein is Sodium channel neurotoxin MeuNaTxalpha-9.